The chain runs to 184 residues: Large ribosomal subunit protein uL5 (184 aa).

This sequence belongs to the universal ribosomal protein uL5 family. In terms of assembly, component of the large ribosomal subunit. Interacts with Fmr1 to form the RNA-induced silencing complex (RISC), a ribonucleoprotein (RNP) complex involved in translation regulation, other components of the complex are RpL5, Rm62, AGO2 and Dcr-1.

The protein resides in the nucleus. Its subcellular location is the cytoplasm. Component of the ribosome, a large ribonucleoprotein complex responsible for the synthesis of proteins in the cell. The small ribosomal subunit (SSU) binds messenger RNAs (mRNAs) and translates the encoded message by selecting cognate aminoacyl-transfer RNA (tRNA) molecules. The large subunit (LSU) contains the ribosomal catalytic site termed the peptidyl transferase center (PTC), which catalyzes the formation of peptide bonds, thereby polymerizing the amino acids delivered by tRNAs into a polypeptide chain. The nascent polypeptides leave the ribosome through a tunnel in the LSU and interact with protein factors that function in enzymatic processing, targeting, and the membrane insertion of nascent chains at the exit of the ribosomal tunnel. This chain is Large ribosomal subunit protein uL5 (RpL11), found in Drosophila melanogaster (Fruit fly).